The primary structure comprises 77 residues: Conotoxin VnMEKL-0223 (77 aa).

The first 19 residues, 1–19 (MQKLTILLLVAAVLMSTQA), serve as a signal peptide directing secretion. Residues 20-37 (LIKGGGEKRPKEKIKFLS) constitute a propeptide that is removed on maturation. Disulfide bonds link cysteine 51–cysteine 65, cysteine 58–cysteine 69, and cysteine 64–cysteine 74.

The protein belongs to the conotoxin O2 superfamily. In terms of tissue distribution, expressed by the venom duct.

It is found in the secreted. In Conus ventricosus (Mediterranean cone), this protein is Conotoxin VnMEKL-0223.